A 51-amino-acid chain; its full sequence is Large ribosomal subunit protein bL33 (51 aa).

Belongs to the bacterial ribosomal protein bL33 family. In terms of assembly, part of the 50S ribosomal subunit. Cross-links to the P and E site tRNAs.

The chain is Large ribosomal subunit protein bL33 from Pseudomonas aeruginosa (strain ATCC 15692 / DSM 22644 / CIP 104116 / JCM 14847 / LMG 12228 / 1C / PRS 101 / PAO1).